Consider the following 237-residue polypeptide: Uridylate kinase (237 aa).

Position 12–15 (12–15 (KLSG)) interacts with ATP. An involved in allosteric activation by GTP region spans residues 20–25 (GENGFG). A UMP-binding site is contributed by glycine 54. ATP is bound by residues glycine 55 and arginine 59. UMP-binding positions include aspartate 72 and 133 to 140 (TGNPYFST). Positions 166 and 169 each coordinate ATP.

This sequence belongs to the UMP kinase family. As to quaternary structure, homohexamer.

It localises to the cytoplasm. The catalysed reaction is UMP + ATP = UDP + ADP. Its pathway is pyrimidine metabolism; CTP biosynthesis via de novo pathway; UDP from UMP (UMPK route): step 1/1. With respect to regulation, allosterically activated by GTP. Inhibited by UTP. Its function is as follows. Catalyzes the reversible phosphorylation of UMP to UDP. In Clostridium perfringens (strain ATCC 13124 / DSM 756 / JCM 1290 / NCIMB 6125 / NCTC 8237 / Type A), this protein is Uridylate kinase.